We begin with the raw amino-acid sequence, 107 residues long: Ig kappa chain V-VI region NQ5-78.2.6 (107 aa).

Residues 1 to 23 form a framework-1 region; the sequence is QILLTQSPAIMSASPGQKVTMTC. A disulfide bridge connects residues Cys-23 and Cys-87. A complementarity-determining-1 region spans residues 24–33; that stretch reads SASSSVSYMH. The interval 34-48 is framework-2; sequence WYQQKSGTSPKRWIY. The complementarity-determining-2 stretch occupies residues 49-55; it reads DTSKLAS. The tract at residues 56 to 87 is framework-3; the sequence is GVPARFXGSGSATSYSLTITSMQAEDAATYYC. Residues 88–96 form a complementarity-determining-3 region; sequence QQWSSNPLT. The segment at 97–106 is framework-4; sequence FGSGTKLEXK.

In terms of biological role, anti-2-phenyl oxazolone (PHOX) Antibody. The protein is Ig kappa chain V-VI region NQ5-78.2.6 of Mus musculus (Mouse).